A 581-amino-acid chain; its full sequence is Transcription factor GTE2 (581 aa).

Residues 130–153 form a disordered region; the sequence is VKKTKTKKKKIGHGQKRSNPFATD. Over residues 131–145 the composition is skewed to basic residues; that stretch reads KKTKTKKKKIGHGQK. The Bromo domain maps to 169 to 275; the sequence is KVLKSMMTTC…SQFDVWFNPT (107 aa). Disordered stretches follow at residues 329 to 399 and 470 to 581; these read PLLP…KREM and KRQG…KEAP. The span at 346–365 shows a compositional bias: pro residues; the sequence is PSPPPSPVQPPPPPSPPPQP. Positions 389 to 470 constitute an NET domain; sequence PKAKDPNKRE…NYRKMASKIK (82 aa). 2 stretches are compositionally biased toward basic and acidic residues: residues 390 to 399 and 493 to 503; these read KAKDPNKREM and SAEKRGRKGGE. Residues 504–517 show a composition bias toward acidic residues; that stretch reads AGEEDVDIGEDIPV. Residues 530-564 show a composition bias toward low complexity; sequence TAAAASGGSSSSGSFSSSGSSSSSDSESGSSSGSD.

The protein resides in the nucleus. In Arabidopsis thaliana (Mouse-ear cress), this protein is Transcription factor GTE2 (GTE2).